Reading from the N-terminus, the 50-residue chain is Photosystem I reaction center subunit IX (50 aa).

The helical transmembrane segment at 7–27 threads the bilayer; the sequence is YLSTAPVLAILCCSFLAGLVI.

The protein belongs to the PsaJ family.

It is found in the plastid. The protein resides in the chloroplast thylakoid membrane. Functionally, may help in the organization of the PsaE and PsaF subunits. The chain is Photosystem I reaction center subunit IX from Pinus koraiensis (Korean pine).